We begin with the raw amino-acid sequence, 904 residues long: E3 ubiquitin-protein ligase ZNF598 (904 aa).

The RING-type zinc finger occupies 29-69; sequence CVLCCGDLEATALGRCDHPVCYRCSTKMRVLCEQRYCAVCR. Residues 187–210 form a C2H2-type zinc finger; the sequence is PLCKFCDERYLDNDELLKHLRRDH. Residue tyrosine 306 is modified to Phosphotyrosine. Disordered regions lie at residues 312–469 and 490–656; these read YSRQ…GLAL and VSSV…LPRP. Low complexity predominate over residues 346 to 358; the sequence is AAAVRASVAAQQQ. Over residues 359 to 388 the composition is skewed to basic and acidic residues; the sequence is EEARRSEDQEEGGRPKKEEAAARGPEDPRG. Over residues 404–416 the composition is skewed to polar residues; that stretch reads ETSTNGPVSQEAF. Residues 418 to 431 show a composition bias toward low complexity; the sequence is VTGPAAPGCVGVPG. Glycine 428, glycine 431, and serine 437 each carry phosphoserine. Low complexity-rich tracts occupy residues 447–461 and 502–513; these read SLSASTSSSCSTAAT and SLVSAWNSSSSS. Residues 521-531 show a composition bias toward polar residues; the sequence is LSAQATGSGQP. The segment covering 534 to 543 has biased composition (basic residues); that stretch reads KAGKGSRGGR. Residues 564 to 584 are compositionally biased toward polar residues; the sequence is LLSTRPTGSVSSTLGLASIQP.

Belongs to the ZNF598/HEL2 family. Interacts with the E2 ubiquitin-conjugating enzyme UBE2D3. Component of the 4EHP-GYF2 complex, at least composed of EIF4E2, GIGYF2 and ZNF598.

Its subcellular location is the cytoplasm. The protein resides in the cytosol. The enzyme catalyses S-ubiquitinyl-[E2 ubiquitin-conjugating enzyme]-L-cysteine + [acceptor protein]-L-lysine = [E2 ubiquitin-conjugating enzyme]-L-cysteine + N(6)-ubiquitinyl-[acceptor protein]-L-lysine.. It functions in the pathway protein modification; protein ubiquitination. Its function is as follows. E3 ubiquitin-protein ligase that plays a key role in the ribosome quality control (RQC), a pathway that takes place when a ribosome has stalled during translation, leading to degradation of nascent peptide chains. ZNF598 is activated when ribosomes are stalled within an mRNA following translation of prematurely polyadenylated mRNAs. Acts as a ribosome collision sensor: specifically recognizes and binds collided di-ribosome, which arises when a trailing ribosome encounters a slower leading ribosome, leading to terminally arrest translation. Following binding to colliding ribosomes, mediates monoubiquitination of 40S ribosomal proteins RPS10/eS10 and RPS3/uS3, and 'Lys-63'-linked polyubiquitination of RPS20/uS10. Polyubiquitination of RPS20/uS10 promotes recruitment of the RQT (ribosome quality control trigger) complex, which drives the disassembly of stalled ribosomes, followed by degradation of nascent peptides. E3 ubiquitin-protein ligase activity is dependent on the E2 ubiquitin-conjugating enzyme UBE2D3. Also acts as an adapter that recruits the 4EHP-GYF2 complex to mRNAs. Independently of its role in RQC, may also act as a negative regulator of interferon-stimulated gene (ISG) expression. In terms of biological role, (Microbial infection) Required for poxvirus protein synthesis by mediating ubiquitination of RPS10/eS10 and RPS20/uS10. Poxvirus encoding mRNAs contain unusual 5' poly(A) leaders and ZNF598 is required for their translational efficiency, possibly via its ability to suppress readthrough or sliding on shorter poly(A) tracts. The protein is E3 ubiquitin-protein ligase ZNF598 of Homo sapiens (Human).